Here is an 82-residue protein sequence, read N- to C-terminus: UPF0437 protein in nifX-nifW intergenic region (82 aa).

It belongs to the UPF0437 family.

This is UPF0437 protein in nifX-nifW intergenic region from Frankia alni.